A 237-amino-acid chain; its full sequence is ATP synthase subunit a (237 aa).

A run of 4 helical transmembrane segments spans residues 17–37, 78–98, 178–198, and 201–221; these read LSDM…AVAA, LGVT…PFWL, ILLG…CGSI, and MVIM…AFIF.

It belongs to the ATPase A chain family. F-type ATPases have 2 components, CF(1) - the catalytic core - and CF(0) - the membrane proton channel. CF(1) has five subunits: alpha(3), beta(3), gamma(1), delta(1), epsilon(1). CF(0) has three main subunits: a(1), b(2) and c(9-12). The alpha and beta chains form an alternating ring which encloses part of the gamma chain. CF(1) is attached to CF(0) by a central stalk formed by the gamma and epsilon chains, while a peripheral stalk is formed by the delta and b chains.

The protein resides in the cell membrane. Functionally, key component of the proton channel; it plays a direct role in the translocation of protons across the membrane. In Bacillus caldotenax, this protein is ATP synthase subunit a.